Here is a 570-residue protein sequence, read N- to C-terminus: Sulfite reductase [NADPH] hemoprotein beta-component (570 aa).

The [4Fe-4S] cluster site is built by Cys-434, Cys-440, Cys-479, and Cys-483. Cys-483 serves as a coordination point for siroheme.

Belongs to the nitrite and sulfite reductase 4Fe-4S domain family. In terms of assembly, alpha(8)-beta(8). The alpha component is a flavoprotein, the beta component is a hemoprotein. It depends on siroheme as a cofactor. The cofactor is [4Fe-4S] cluster.

It catalyses the reaction hydrogen sulfide + 3 NADP(+) + 3 H2O = sulfite + 3 NADPH + 4 H(+). Its pathway is sulfur metabolism; hydrogen sulfide biosynthesis; hydrogen sulfide from sulfite (NADPH route): step 1/1. Its function is as follows. Component of the sulfite reductase complex that catalyzes the 6-electron reduction of sulfite to sulfide. This is one of several activities required for the biosynthesis of L-cysteine from sulfate. The chain is Sulfite reductase [NADPH] hemoprotein beta-component from Salmonella enteritidis PT4 (strain P125109).